We begin with the raw amino-acid sequence, 436 residues long: Xylose isomerase (436 aa).

Catalysis depends on residues histidine 100 and aspartate 103. 7 residues coordinate Mg(2+): glutamate 231, glutamate 267, histidine 270, aspartate 295, aspartate 306, aspartate 308, and aspartate 338.

It belongs to the xylose isomerase family. In terms of assembly, homotetramer. Mg(2+) is required as a cofactor.

It is found in the cytoplasm. It carries out the reaction alpha-D-xylose = alpha-D-xylulofuranose. This Ruegeria sp. (strain TM1040) (Silicibacter sp.) protein is Xylose isomerase.